Reading from the N-terminus, the 398-residue chain is Acetyl-CoA acetyltransferase erg10B, cytosolic (398 aa).

Cys92 (acyl-thioester intermediate) is an active-site residue. Tyr187 provides a ligand contact to K(+). Residues Asn229 and Lys232 each contribute to the CoA site. K(+) is bound by residues Ala249, Pro250, and Ser252. Ser253 contributes to the CoA binding site. Val350 provides a ligand contact to K(+). Active-site proton acceptor residues include His354 and Cys384. Position 385 (Asn385) interacts with chloride.

It belongs to the thiolase-like superfamily. Thiolase family. In terms of assembly, homotetramer. It depends on K(+) as a cofactor.

Its subcellular location is the cytoplasm. It localises to the cytosol. It carries out the reaction 2 acetyl-CoA = acetoacetyl-CoA + CoA. It participates in metabolic intermediate biosynthesis; (R)-mevalonate biosynthesis; (R)-mevalonate from acetyl-CoA: step 1/3. Activity is increased by monovalent cations such as K(+), Rb(+) or Cs(+). Functionally, acetyl-CoA acetyltransferase; part of the first module of ergosterol biosynthesis pathway that includes the early steps of the pathway, conserved across all eukaryotes, and which results in the formation of mevalonate from acetyl-coenzyme A (acetyl-CoA). In this module, the cytosolic acetyl-CoA acetyltransferase erg10B catalyzes the formation of acetoacetyl-CoA. The hydroxymethylglutaryl-CoA synthases AFUA_8G07210 and AFUA_3G10660 then condense acetyl-CoA with acetoacetyl-CoA to form HMG-CoA. The rate-limiting step of the early module is the reduction to mevalonate by the 3-hydroxy-3-methylglutaryl-coenzyme A (HMG-CoA) reductases hmg1 and hmg2. Mevalonate is also a precursor for the extracellular siderophore triacetylfusarinine C (TAFC). This chain is Acetyl-CoA acetyltransferase erg10B, cytosolic, found in Aspergillus fumigatus (strain CBS 144.89 / FGSC A1163 / CEA10) (Neosartorya fumigata).